We begin with the raw amino-acid sequence, 1147 residues long: Myosin light chain kinase, smooth muscle (1147 aa).

Residues methionine 1 to proline 41 are actin-binding. Positions methionine 1–threonine 330 are disordered. Residues proline 26 to proline 41 are calmodulin-binding. Positions threonine 43–alanine 55 are enriched in pro residues. Tandem repeats lie at residues serine 100 to glutamate 111 and threonine 112 to glutamate 123. The interval serine 100–glutamate 288 is 16 X 12 AA tandem repeats. Residues threonine 124–glutamate 132 form a 3; truncated repeat. Repeat copies occupy residues threonine 133–glutamate 144, serine 145–glutamate 156, threonine 157–glutamate 168, threonine 169–glutamate 180, threonine 181–glutamate 192, threonine 193–glutamate 204, threonine 205–glutamate 216, threonine 217–glutamate 228, threonine 229–glutamate 240, threonine 241–glutamate 252, threonine 253–glutamate 264, threonine 265–glutamate 276, and threonine 277–glutamate 288. Residues proline 292–valine 692 are actin-binding (calcium/calmodulin-insensitive). Residues alanine 293–lysine 320 are compositionally biased toward basic and acidic residues. Ig-like C2-type domains are found at residues proline 329–threonine 417 and proline 469–threonine 557. Residues cysteine 350 and cysteine 401 are joined by a disulfide bond. 2 disordered regions span residues serine 424–glutamate 476 and serine 644–glutamate 678. Residues proline 459–proline 472 are compositionally biased toward pro residues. A Fibronectin type-III domain is found at proline 565 to glutamate 657. Positions serine 644–threonine 653 are enriched in polar residues. Residues proline 662–proline 677 are compositionally biased toward acidic residues. Serine 670 bears the Phosphoserine mark. Tyrosine 681 carries the post-translational modification Phosphotyrosine; by ABL1. The Protein kinase domain maps to tyrosine 696–leucine 951. ATP is bound by residues leucine 702–valine 710 and lysine 725. At tyrosine 807 the chain carries Phosphotyrosine; by ABL1. The active-site Proton acceptor is the aspartate 817. The residue at position 867 (tyrosine 867) is a Phosphotyrosine; by ABL1. The interval threonine 943–threonine 1006 is calmodulin-binding. Residues serine 991, serine 992, serine 1004, serine 1005, and serine 1008 each carry the phosphoserine modification. Residues leucine 999 to glutamate 1019 are disordered. Positions arginine 1002–leucine 1013 are enriched in polar residues. Residue threonine 1010 is modified to Phosphothreonine. At serine 1011 the chain carries Phosphoserine. Residues proline 1041 to isoleucine 1130 form the Ig-like C2-type 3 domain. Cysteines 1062 and 1114 form a disulfide.

This sequence belongs to the protein kinase superfamily. CAMK Ser/Thr protein kinase family. All isoforms including Telokin bind calmodulin. Interacts with SVIL. Interacts with CTTN; this interaction is reduced during thrombin-induced endothelial cell (EC) contraction but is promoted by the barrier-protective agonist sphingosine 1-phosphate (S1P) within lamellipodia. A complex made of ABL1, CTTN and MYLK regulates cortical actin-based cytoskeletal rearrangement critical to sphingosine 1-phosphate (S1P)-mediated endothelial cell (EC) barrier enhancement. Binds to NAA10/ARD1 and PTK2B/PYK2. The cofactor is Mg(2+). Ca(2+) is required as a cofactor. Post-translationally, the C-terminus is deglutamylated by AGTPBP1/CCP1, AGBL1/CCP4 and AGBL4/CCP6, leading to the formation of Myosin light chain kinase, smooth muscle, deglutamylated form. The consequences of C-terminal deglutamylation are unknown. In terms of processing, can probably be down-regulated by phosphorylation. Tyrosine phosphorylation by ABL1 increases kinase activity, reverses MLCK-mediated inhibition of Arp2/3-mediated actin polymerization, and enhances CTTN-binding. Phosphorylation by SRC promotes CTTN binding. In terms of tissue distribution, isoform Telokin is found in all smooth muscle tested except the aorta. It is not present in non-muscle tissue.

It localises to the cytoplasm. The protein resides in the cell projection. It is found in the lamellipodium. Its subcellular location is the cleavage furrow. The protein localises to the cytoskeleton. It localises to the stress fiber. The enzyme catalyses L-seryl-[myosin light chain] + ATP = O-phospho-L-seryl-[myosin light chain] + ADP + H(+). It catalyses the reaction L-threonyl-[myosin light chain] + ATP = O-phospho-L-threonyl-[myosin light chain] + ADP + H(+). With respect to regulation, all catalytically active isoforms require binding to calcium and calmodulin for activation. Functionally, calcium/calmodulin-dependent myosin light chain kinase implicated in smooth muscle contraction via phosphorylation of myosin light chains (MLC). Also regulates actin-myosin interaction through a non-kinase activity. Phosphorylates PTK2B/PYK2 and myosin light-chains. Involved in the inflammatory response (e.g. apoptosis, vascular permeability, leukocyte diapedesis), cell motility and morphology, airway hyperreactivity and other activities relevant to asthma. Required for tonic airway smooth muscle contraction that is necessary for physiological and asthmatic airway resistance. Necessary for gastrointestinal motility. Implicated in the regulation of endothelial as well as vascular permeability, probably via the regulation of cytoskeletal rearrangements. In the nervous system it has been shown to control the growth initiation of astrocytic processes in culture and to participate in transmitter release at synapses formed between cultured sympathetic ganglion cells. Critical participant in signaling sequences that result in fibroblast apoptosis. Plays a role in the regulation of epithelial cell survival. Required for epithelial wound healing, especially during actomyosin ring contraction during purse-string wound closure. Mediates RhoA-dependent membrane blebbing. Triggers TRPC5 channel activity in a calcium-dependent signaling, by inducing its subcellular localization at the plasma membrane. Promotes cell migration (including tumor cells) and tumor metastasis. PTK2B/PYK2 activation by phosphorylation mediates ITGB2 activation and is thus essential to trigger neutrophil transmigration during acute lung injury (ALI). May regulate optic nerve head astrocyte migration. Probably involved in mitotic cytoskeletal regulation. Regulates tight junction probably by modulating ZO-1 exchange in the perijunctional actomyosin ring. Mediates burn-induced microvascular barrier injury; triggers endothelial contraction in the development of microvascular hyperpermeability by phosphorylating MLC. Essential for intestinal barrier dysfunction. Mediates Giardia spp.-mediated reduced epithelial barrier function during giardiasis intestinal infection via reorganization of cytoskeletal F-actin and tight junctional ZO-1. Necessary for hypotonicity-induced Ca(2+) entry and subsequent activation of volume-sensitive organic osmolyte/anion channels (VSOAC) in cervical cancer cells. This Oryctolagus cuniculus (Rabbit) protein is Myosin light chain kinase, smooth muscle (MYLK).